Here is a 76-residue protein sequence, read N- to C-terminus: Theta defensin subunit C (76 aa).

Positions 1-22 (MRTFAFLTAMLLLVALHAQAEA) are cleaved as a signal peptide. Positions 23 to 64 (RQARADEAAIQEQPGADDQGMAHSFTRNESAVLPLSESERGL) are excised as a propeptide. Residue R65 forms a Cyclopeptide (Arg-Cys) (interchain with C-73 in subunit A); in form BTD-4 linkage. A disulfide bridge links C68 with C73. Residue C73 forms a Cyclopeptide (Cys-Arg) (interchain with R-65 in subunit A); in form BTD-4 linkage. Positions 74-76 (RLL) are excised as a propeptide.

It belongs to the alpha-defensin family. Theta subfamily. As to quaternary structure, BTD-4 is a cyclic heterodimer composed of subunits A and C; disulfide-linked. Post-translationally, forms a cyclic peptide with subunit A (BTD-4). An additional intersubunit disulfide bond is formed.

In terms of biological role, BTD-4 has antimicrobial activity against the Gram-negative bacterium E.coli ML35, the Gram-positive bacterium S.aureus 502a, and the fungus C.albicans 16820. The chain is Theta defensin subunit C (BTDC) from Papio anubis (Olive baboon).